Consider the following 911-residue polypeptide: DNA ligase 4 (911 aa).

Glu271, Thr272, Lys273, Leu274, Arg278, Glu331, Lys345, Phe367, Glu427, Lys432, Lys449, and Lys451 together coordinate ATP. Lys273 acts as the N6-AMP-lysine intermediate in catalysis. Glu331 serves as a coordination point for Mg(2+). Glu427 contacts Mg(2+). Residues 610-620 (LATKHLHVGDD) are required for catalytic activity. BRCT domains are found at residues 654–743 (KVSN…PRFM) and 808–911 (SPLS…QYLL).

This sequence belongs to the ATP-dependent DNA ligase family. In terms of assembly, interacts with XRCC4; the LIG4-XRCC4 subcomplex has a 1:2 stoichiometry and XRCC4 is required for LIG4 stability. Component of the core long-range non-homologous end joining (NHEJ) complex (also named DNA-PK complex) composed of PRKDC, LIG4, XRCC4, XRCC6/Ku70, XRCC5/Ku86 and NHEJ1/XLF. Additional component of the NHEJ complex includes PAXX. Following autophosphorylation, PRKDC dissociates from DNA, leading to formation of the short-range NHEJ complex, composed of LIG4, XRCC4, XRCC6/Ku70, XRCC5/Ku86 and NHEJ1/XLF. Interacts with DCLRE1C; the interaction is direct. Interacts with APLF. Mg(2+) is required as a cofactor.

It is found in the nucleus. It catalyses the reaction ATP + (deoxyribonucleotide)n-3'-hydroxyl + 5'-phospho-(deoxyribonucleotide)m = (deoxyribonucleotide)n+m + AMP + diphosphate.. In terms of biological role, DNA ligase involved in DNA non-homologous end joining (NHEJ); required for double-strand break (DSB) repair and V(D)J recombination. Catalyzes the NHEJ ligation step of the broken DNA during DSB repair by resealing the DNA breaks after the gap filling is completed. Joins single-strand breaks in a double-stranded polydeoxynucleotide in an ATP-dependent reaction. LIG4 is mechanistically flexible: it can ligate nicks as well as compatible DNA overhangs alone, while in the presence of XRCC4, it can ligate ends with 2-nucleotides (nt) microhomology and 1-nt gaps. Forms a subcomplex with XRCC4; the LIG4-XRCC4 subcomplex is responsible for the NHEJ ligation step and XRCC4 enhances the joining activity of LIG4. Binding of the LIG4-XRCC4 complex to DNA ends is dependent on the assembly of the DNA-dependent protein kinase complex DNA-PK to these DNA ends. LIG4 regulates nuclear localization of XRCC4. This is DNA ligase 4 from Mus musculus (Mouse).